Reading from the N-terminus, the 140-residue chain is Pro-variola growth factor (140 aa).

The signal sequence occupies residues 1–18 (MSMKYLMLLFAAMIIRSF). The Extracellular portion of the chain corresponds to 19-100 (ANSGNAIETT…SEKPNTTTSY (82 aa)). N-linked (GlcNAc...) asparagine; by host glycosylation is present at asparagine 34. Positions 41–81 (AIRLCGPEGDRYCFHGICIHARDIDGMYCRCSHGYTGIRCQ) constitute an EGF-like domain. Intrachain disulfides connect cysteine 45–cysteine 58, cysteine 53–cysteine 69, and cysteine 71–cysteine 80. A glycan (N-linked (GlcNAc...) asparagine; by host) is linked at asparagine 95. A helical membrane pass occupies residues 101–121 (IPSPGIVLVLLVSIIVCCLLF). The Cytoplasmic portion of the chain corresponds to 122–140 (VYRFTRRTNKLPLQDMVVP).

It belongs to the orthopoxvirus OPG019 family. Variola growth factor interacts with host EGFR and promotes EGFR dimerization.

It localises to the host membrane. It is found in the secreted. Stimulates cellular proliferation (hyperplasia)and mobility around infected cells to promote rapid and efficient spread of infection. This effect is beneficial for virus replication in vivo, because poxviruses replicate possibly better in proliferating cells than in quiescent cells. Acts by binding host EGFR, inducing its dimerization, autophosphorylation and leading to activation of several cellular pathways regulating cell proliferation or cell survival. The activation by host EGFR of mitogen activated protein kinases (MAPK) and extracellular-signal regulated kinases (ERK) are essential for the positive effect of vaccinia growth factor on poxvirus virulence in vivo. In Variola virus (isolate Human/India/Ind3/1967) (VARV), this protein is Pro-variola growth factor (OPG019).